The sequence spans 342 residues: Methionyl-tRNA formyltransferase (342 aa).

108–111 (SLLP) serves as a coordination point for (6S)-5,6,7,8-tetrahydrofolate.

This sequence belongs to the Fmt family.

It catalyses the reaction L-methionyl-tRNA(fMet) + (6R)-10-formyltetrahydrofolate = N-formyl-L-methionyl-tRNA(fMet) + (6S)-5,6,7,8-tetrahydrofolate + H(+). Functionally, attaches a formyl group to the free amino group of methionyl-tRNA(fMet). The formyl group appears to play a dual role in the initiator identity of N-formylmethionyl-tRNA by promoting its recognition by IF2 and preventing the misappropriation of this tRNA by the elongation apparatus. This is Methionyl-tRNA formyltransferase from Prochlorococcus marinus (strain MIT 9313).